The following is a 407-amino-acid chain: 4-hydroxy-3-methylbut-2-en-1-yl diphosphate synthase (flavodoxin) (407 aa).

[4Fe-4S] cluster contacts are provided by Cys-296, Cys-299, Cys-342, and Glu-349.

It belongs to the IspG family. [4Fe-4S] cluster serves as cofactor.

The catalysed reaction is (2E)-4-hydroxy-3-methylbut-2-enyl diphosphate + oxidized [flavodoxin] + H2O + 2 H(+) = 2-C-methyl-D-erythritol 2,4-cyclic diphosphate + reduced [flavodoxin]. Its pathway is isoprenoid biosynthesis; isopentenyl diphosphate biosynthesis via DXP pathway; isopentenyl diphosphate from 1-deoxy-D-xylulose 5-phosphate: step 5/6. In terms of biological role, converts 2C-methyl-D-erythritol 2,4-cyclodiphosphate (ME-2,4cPP) into 1-hydroxy-2-methyl-2-(E)-butenyl 4-diphosphate. This chain is 4-hydroxy-3-methylbut-2-en-1-yl diphosphate synthase (flavodoxin), found in Methylococcus capsulatus (strain ATCC 33009 / NCIMB 11132 / Bath).